Reading from the N-terminus, the 1604-residue chain is Calmodulin-regulated spectrin-associated protein 1 (1604 aa).

Ser-216 carries the post-translational modification Phosphoserine. Residues 235–350 (PVDFARVVRY…FIAELFWWFE (116 aa)) form the Calponin-homology (CH) domain. 3 positions are modified to phosphoserine: Ser-390, Ser-394, and Ser-435. The segment at 394 to 413 (SPAAMSPADLPPSTQPLTEG) is disordered. The tract at residues 444–491 (RQKQQKVSQAEEIPDQRHRSNSLTRADGQPRGAAIAWPDKKNRPVSQP) is disordered. Thr-531 bears the Phosphothreonine mark. A phosphoserine mark is found at Ser-571, Ser-574, Ser-581, Ser-593, Ser-607, Ser-647, Ser-739, Ser-745, Ser-755, and Ser-757. The interval 642–671 (MAKRPSEGSQPLVRKKVTGSHGSRDLNRTF) is disordered. Residues 784 to 806 (EEESAKLQEDMKVKEHEDKDDAS) are compositionally biased toward basic and acidic residues. Disordered regions lie at residues 784–824 (EEES…SMSM) and 842–888 (LNSC…KDPA). Composition is skewed to low complexity over residues 813–824 (LSTTSQLSSMSM) and 847–858 (TKSSTSSSQKTT). The span at 874-886 (QKREQSPSRHSKD) shows a compositional bias: basic and acidic residues. The sufficient for interaction with SPTBN1 stretch occupies residues 888–909 (ASLLASELVQLHMQLEEKRRAI). Coiled-coil stretches lie at residues 890-926 (LLAS…QRLK) and 1026-1058 (DVNE…QEQL). The interval 920–939 (SARQRLKLGKAAFLHVVKKG) is sufficient for interaction with calmodulin. 3 disordered regions span residues 1085-1163 (FVEP…GELP), 1246-1271 (PDED…KPGV), and 1298-1448 (RKAE…DRDW). Ser-1090 is modified (phosphoserine). A compositionally biased stretch (basic and acidic residues) spans 1113–1124 (RPAELKVPKDRQ). Residues 1125-1137 (QGCSRSKTPTPSV) show a composition bias toward polar residues. Ser-1154 bears the Phosphoserine mark. 2 stretches are compositionally biased toward basic and acidic residues: residues 1246–1258 (PDED…HESS) and 1298–1348 (RKAE…EYLR). A coiled-coil region spans residues 1286–1357 (AKKRAAFLLK…RRKQQQALEE (72 aa)). Residues 1363 to 1374 (PKSKPKKPRPKS) are compositionally biased toward basic residues. The span at 1382–1394 (SDSGTKCSSTPDN) shows a compositional bias: polar residues. Over residues 1395 to 1412 (LSQTHSGSSLSLASAATT) the composition is skewed to low complexity. Phosphoserine is present on residues Ser-1400 and Ser-1429. The region spanning 1465–1599 (GPKLFKEPSS…QPKRPTVPKK (135 aa)) is the CKK domain. Phosphotyrosine is present on Tyr-1539.

Belongs to the CAMSAP1 family. In terms of assembly, interacts with spectrin via SPTBN1; the interaction is direct. Interacts with calmodulin; calcium-dependent it prevents interaction with spectrin. As to expression, in brain, specifically expressed in astrocytes (at protein level).

It is found in the cytoplasm. The protein resides in the cytoskeleton. Its function is as follows. Key microtubule-organizing protein that specifically binds the minus-end of non-centrosomal microtubules and regulates their dynamics and organization. Specifically recognizes growing microtubule minus-ends and stabilizes microtubules. Acts on free microtubule minus-ends that are not capped by microtubule-nucleating proteins or other factors and protects microtubule minus-ends from depolymerization. In contrast to CAMSAP2 and CAMSAP3, tracks along the growing tips of minus-end microtubules without significantly affecting the polymerization rate: binds at the very tip of the microtubules minus-end and acts as a minus-end tracking protein (-TIP) that dissociates from microtubules after allowing tubulin incorporation. Through interaction with spectrin may regulate neurite outgrowth. This chain is Calmodulin-regulated spectrin-associated protein 1 (Camsap1), found in Rattus norvegicus (Rat).